The chain runs to 576 residues: (+)-alpha-terpineol synthase (576 aa).

5 residues coordinate (2E)-geranyl diphosphate: R286, D323, D327, R466, and N469. Residues D323 and D327 each contribute to the Mg(2+) site. The DDXXD motif signature appears at 323 to 327 (DDVYD). Residues N469, T473, and E477 each coordinate Mg(2+).

It belongs to the terpene synthase family. Tpsb subfamily. The cofactor is Mg(2+). It depends on Mn(2+) as a cofactor.

It carries out the reaction (2E)-geranyl diphosphate + H2O = (R)-alpha-terpineol + diphosphate. In terms of biological role, monoterpene synthase producing mainly (+)-alpha-terpineol (44%) and (-)-limonene (33.6%) and lower amounts of (E)-geraniol (5.9%), linalool (5.0%), myrcene (3.4%), (-)-alpha-pinene (3.3%), (+)-sabinene (3.0%) and alpha-terpinolene (1.6%). This Santalum album (White sandalwood) protein is (+)-alpha-terpineol synthase.